An 801-amino-acid chain; its full sequence is Probable DNA helicase MCM8 (801 aa).

The C4-type zinc-finger motif lies at 180-207 (CGKCKTGITREFTDGKFSPPLKCDSHGC). The region spanning 351-558 (TFRRILHSVC…LLDKQVSEHI (208 aa)) is the MCM domain. Residue 403-410 (GDPGLGKS) coordinates ATP. Residues 534-537 (SRFD) carry the Arginine finger motif.

The protein belongs to the MCM family.

Its subcellular location is the nucleus. It carries out the reaction ATP + H2O = ADP + phosphate + H(+). Functionally, probable DNA helicase that plays a role in meiotic double-strand break (DSB) repair, but seems not required for recombination with the homologous chromosome. May be involved with RAD51 in a backup pathway that repairs meiotic DSB without giving meiotic crossover, in parallel to the meiotic homologous recombination which relies on DMC1. This is Probable DNA helicase MCM8 (MCM8) from Arabidopsis thaliana (Mouse-ear cress).